The primary structure comprises 843 residues: Glycogen phosphorylase, brain form (843 aa).

The residue at position 2 (A2) is an N-acetylalanine. S15 is modified (phosphoserine; by PHK; in form phosphorylase A). D43, Y197, and R310 together coordinate AMP. Phosphotyrosine is present on Y197. Y473 carries the post-translational modification Phosphotyrosine. A pyridoxal 5'-phosphate-binding site is contributed by K569. The segment at 677–678 is pyridoxal 5'-phosphate; it reads TG. K681 carries the N6-(pyridoxal phosphate)lysine modification.

It belongs to the glycogen phosphorylase family. In terms of assembly, homodimer. Dimers associate into a tetramer to form the enzymatically active phosphorylase A. Requires pyridoxal 5'-phosphate as cofactor. Phosphorylation of Ser-15 converts phosphorylase B (unphosphorylated) to phosphorylase A.

The catalysed reaction is [(1-&gt;4)-alpha-D-glucosyl](n) + phosphate = [(1-&gt;4)-alpha-D-glucosyl](n-1) + alpha-D-glucose 1-phosphate. With respect to regulation, activity of phosphorylase is controlled both by allosteric means (through the non-covalent binding of metabolites) and by covalent modification. Thus AMP allosterically activates, whereas ATP, ADP, and glucose-6-phosphate allosterically inhibit, phosphorylase B. In terms of biological role, glycogen phosphorylase that regulates glycogen mobilization. Phosphorylase is an important allosteric enzyme in carbohydrate metabolism. Enzymes from different sources differ in their regulatory mechanisms and in their natural substrates. However, all known phosphorylases share catalytic and structural properties. This is Glycogen phosphorylase, brain form (PYGB) from Bos taurus (Bovine).